Here is a 348-residue protein sequence, read N- to C-terminus: MLVSDFQFDLPDELIARYPMPERSASRLLMLDGNSGETRHGQFRDVLDLLQPGDLLVFNNTRVIPARMFGQKASGGKLEILVERILDDHSVLAHVRASKAPKPGTQILLDNGFSAKMVARHDTLFELHFAGDLPVLDILNQIGHMPLPPYIDRPDENSDKERYQTVYNQRPGAVAAPTAGLHFDEPLLAALREKGVDFAYVTLHVGAGTFQPVRVERLEDHQMHSEYAEVPAEVIAKINATRERGGRVVAVGTTSVRSLETAAQASLKAGKPLSPFFGDTSIFIFPGYQYQLVDVLITNFHLPGSTLIMLVSAFAGYEHVMNAYQEAITSGYRFFSYGDAMFITRQSL.

Belongs to the QueA family. As to quaternary structure, monomer.

The protein resides in the cytoplasm. The catalysed reaction is 7-aminomethyl-7-carbaguanosine(34) in tRNA + S-adenosyl-L-methionine = epoxyqueuosine(34) in tRNA + adenine + L-methionine + 2 H(+). Its pathway is tRNA modification; tRNA-queuosine biosynthesis. Its function is as follows. Transfers and isomerizes the ribose moiety from AdoMet to the 7-aminomethyl group of 7-deazaguanine (preQ1-tRNA) to give epoxyqueuosine (oQ-tRNA). The protein is S-adenosylmethionine:tRNA ribosyltransferase-isomerase of Tolumonas auensis (strain DSM 9187 / NBRC 110442 / TA 4).